Reading from the N-terminus, the 85-residue chain is NAD(P)H-quinone oxidoreductase subunit O (85 aa).

It belongs to the complex I NdhO subunit family. NDH-1 can be composed of about 15 different subunits; different subcomplexes with different compositions have been identified which probably have different functions.

The protein resides in the cellular thylakoid membrane. It carries out the reaction a plastoquinone + NADH + (n+1) H(+)(in) = a plastoquinol + NAD(+) + n H(+)(out). The enzyme catalyses a plastoquinone + NADPH + (n+1) H(+)(in) = a plastoquinol + NADP(+) + n H(+)(out). In terms of biological role, NDH-1 shuttles electrons from an unknown electron donor, via FMN and iron-sulfur (Fe-S) centers, to quinones in the respiratory and/or the photosynthetic chain. The immediate electron acceptor for the enzyme in this species is believed to be plastoquinone. Couples the redox reaction to proton translocation, and thus conserves the redox energy in a proton gradient. Cyanobacterial NDH-1 also plays a role in inorganic carbon-concentration. This chain is NAD(P)H-quinone oxidoreductase subunit O, found in Synechococcus sp. (strain CC9311).